A 434-amino-acid chain; its full sequence is Protein maelstrom homolog (434 aa).

Residues 4-73 (RKASRNAYYF…AQGKDPGPSE (70 aa)) constitute a DNA-binding region (HMG box). The disordered stretch occupies residues 357–385 (SHFNSSNEEQRSNTPIGDYPSRAKISGQN).

This sequence belongs to the maelstrom family. In terms of assembly, interacts with SMARCB1, SIN3B and DDX4. Interacts with piRNA-associated proteins TDRD1, PIWIL1 and PIWIL2. Interacts with TEX19. Testis-specific. Expressed in various cancer cell lines, probably due to demethylation of its promoter.

The protein resides in the cytoplasm. It is found in the nucleus. Functionally, plays a central role during spermatogenesis by repressing transposable elements and preventing their mobilization, which is essential for the germline integrity. Acts via the piRNA metabolic process, which mediates the repression of transposable elements during meiosis by forming complexes composed of piRNAs and Piwi proteins and governs the methylation and subsequent repression of transposons. Its association with piP-bodies suggests a participation in the secondary piRNAs metabolic process. Required for the localization of germ-cell factors to the meiotic nuage. This Homo sapiens (Human) protein is Protein maelstrom homolog (MAEL).